The chain runs to 214 residues: A-type ATP synthase subunit D (214 aa).

It belongs to the V-ATPase D subunit family. In terms of assembly, has multiple subunits with at least A(3), B(3), C, D, E, F, H, I and proteolipid K(x).

It is found in the cell membrane. Its function is as follows. Component of the A-type ATP synthase that produces ATP from ADP in the presence of a proton gradient across the membrane. In Thermococcus sibiricus (strain DSM 12597 / MM 739), this protein is A-type ATP synthase subunit D.